A 206-amino-acid chain; its full sequence is MLNKLELLLTKAGIELSLQQKQQLVAYVDMLNKWNKAYNLTSVREPEQMLVRHIMDSIVVSPYLQGHRFIDVGTGPGLPGIPLAIVRPDSHFTLLDSLGKRVRFLRQVQHELDLVNIEPVQSRVEAYSSEPPFDGVISRAFASLKDMVSWCSHLPEPIHGRFYALKGVLPEEELTILPFGISIDSVIKLNVPELEGQRHLVILKSN.

Residues Gly73, Leu78, 124 to 125, and Arg139 contribute to the S-adenosyl-L-methionine site; that span reads VE.

This sequence belongs to the methyltransferase superfamily. RNA methyltransferase RsmG family.

Its subcellular location is the cytoplasm. The enzyme catalyses guanosine(527) in 16S rRNA + S-adenosyl-L-methionine = N(7)-methylguanosine(527) in 16S rRNA + S-adenosyl-L-homocysteine. Specifically methylates the N7 position of guanine in position 527 of 16S rRNA. In Photorhabdus laumondii subsp. laumondii (strain DSM 15139 / CIP 105565 / TT01) (Photorhabdus luminescens subsp. laumondii), this protein is Ribosomal RNA small subunit methyltransferase G.